Consider the following 82-residue polypeptide: uncharacterized protein (82 aa).

This is an uncharacterized protein from Escherichia coli (strain K12).